We begin with the raw amino-acid sequence, 56 residues long: UPF0391 membrane protein PSHAa0537 (56 aa).

A run of 2 helical transmembrane segments spans residues 6–26 and 27–47; these read ITFLVIALIAAVLGFGGIAGA and AAGIAKIIFFIFLILLVISLV.

This sequence belongs to the UPF0391 family.

The protein localises to the cell membrane. The chain is UPF0391 membrane protein PSHAa0537 from Pseudoalteromonas translucida (strain TAC 125).